A 149-amino-acid polypeptide reads, in one-letter code: 3-dehydroquinate dehydratase (149 aa).

Tyrosine 22 acts as the Proton acceptor in catalysis. Substrate contacts are provided by asparagine 74, histidine 80, and aspartate 87. Histidine 100 serves as the catalytic Proton donor. Substrate contacts are provided by residues 101–102 (MS) and arginine 111.

It belongs to the type-II 3-dehydroquinase family. Homododecamer.

The catalysed reaction is 3-dehydroquinate = 3-dehydroshikimate + H2O. It participates in metabolic intermediate biosynthesis; chorismate biosynthesis; chorismate from D-erythrose 4-phosphate and phosphoenolpyruvate: step 3/7. Its function is as follows. Catalyzes a trans-dehydration via an enolate intermediate. In Leptothrix cholodnii (strain ATCC 51168 / LMG 8142 / SP-6) (Leptothrix discophora (strain SP-6)), this protein is 3-dehydroquinate dehydratase.